The primary structure comprises 165 residues: UPF0178 protein Bphyt_5655 (165 aa).

Disordered regions lie at residues Leu115–Lys134 and Glu139–Glu165.

The protein belongs to the UPF0178 family.

This chain is UPF0178 protein Bphyt_5655, found in Paraburkholderia phytofirmans (strain DSM 17436 / LMG 22146 / PsJN) (Burkholderia phytofirmans).